We begin with the raw amino-acid sequence, 488 residues long: Stromelysin-3 (488 aa).

The signal sequence occupies residues 1–31 (MAPAAWLRSAAARALLPPMLLLLLQPPPLLA). A propeptide spans 32 to 97 (RALPPDAHHL…GLSARNRQKR (66 aa)) (activation peptide). Residues 41–93 (LHAERRGPQPWHAALPSSPAPAPATQEAPRPASSLRPPRCGVPDPSDGLSARN) form a disordered region. Over residues 50-79 (PWHAALPSSPAPAPATQEAPRPASSLRPPR) the composition is skewed to low complexity. The short motif at 78-85 (PRCGVPDP) is the Cysteine switch element. Residues cysteine 80 and aspartate 166 each contribute to the Zn(2+) site. Aspartate 171, glycine 172, glycine 174, and isoleucine 176 together coordinate Ca(2+). 3 residues coordinate Zn(2+): histidine 179, histidine 192, and histidine 215. The active site involves glutamate 216. Residues histidine 219 and histidine 225 each coordinate Zn(2+). Hemopexin repeat units lie at residues 291 to 339 (PDAC…WQGL), 340 to 382 (PSPV…ELGL), 384 to 432 (RFPV…WRGV), and 433 to 480 (PSEI…FFGC). Cysteines 294 and 480 form a disulfide.

This sequence belongs to the peptidase M10A family. Ca(2+) serves as cofactor. It depends on Zn(2+) as a cofactor. Post-translationally, the precursor is cleaved by a furin endopeptidase. As to expression, specifically expressed in stromal cells of breast carcinomas.

Its subcellular location is the secreted. It is found in the extracellular space. The protein localises to the extracellular matrix. May play an important role in the progression of epithelial malignancies. This Homo sapiens (Human) protein is Stromelysin-3 (MMP11).